A 112-amino-acid polypeptide reads, in one-letter code: Ig kappa chain V-III region PC 7132 (112 aa).

The tract at residues 1-23 (DIVLTQSPASLAVSLGQRATISC) is framework-1. C23 and C92 are disulfide-bonded. The tract at residues 24-38 (RASESVDNYGISFMN) is complementarity-determining-1. The interval 39 to 53 (WFQQKPGQPPKLLIY) is framework-2. The segment at 54–60 (AASNQGS) is complementarity-determining-2. The interval 61–92 (GVPARFSGSGSGTDFSLNIHPMEEDDTAMYFC) is framework-3. The segment at 93–102 (QQSKEVPPYT) is complementarity-determining-3. The interval 103-112 (FGGGTKLEIK) is framework-4.

In Mus musculus (Mouse), this protein is Ig kappa chain V-III region PC 7132.